Here is a 114-residue protein sequence, read N- to C-terminus: UPF0145 protein PYRAB04900 (114 aa).

This sequence belongs to the UPF0145 family.

The polypeptide is UPF0145 protein PYRAB04900 (Pyrococcus abyssi (strain GE5 / Orsay)).